A 50-amino-acid polypeptide reads, in one-letter code: Small ribosomal subunit protein uS14 (50 aa).

Residues C15, C18, C33, and C36 each coordinate Zn(2+).

It belongs to the universal ribosomal protein uS14 family. Zinc-binding uS14 subfamily. As to quaternary structure, part of the 30S ribosomal subunit. Zn(2+) serves as cofactor.

In terms of biological role, binds 16S rRNA, required for the assembly of 30S particles. The protein is Small ribosomal subunit protein uS14 of Methanosarcina acetivorans (strain ATCC 35395 / DSM 2834 / JCM 12185 / C2A).